We begin with the raw amino-acid sequence, 500 residues long: NAD(P)H-quinone oxidoreductase chain 4, chloroplastic (500 aa).

The next 14 helical transmembrane spans lie at 4-24 (FPWL…IFFL), 37-57 (IGIC…FFQL), 87-107 (IGPI…AWPV), 113-130 (LFHF…GLFS), 134-154 (LLLF…LLSM), 167-187 (FILY…GMGL), 208-228 (ALEI…LPII), 242-262 (HYST…YGLI), 272-292 (AHSI…IYAA), 305-325 (IAYS…SITD), 330-350 (GAVL…FLAG), 386-406 (LALP…GIIT), 416-436 (VLIT…SLSM), and 462-482 (LFIS…PDFV).

Belongs to the complex I subunit 4 family.

It is found in the plastid. Its subcellular location is the chloroplast thylakoid membrane. It catalyses the reaction a plastoquinone + NADH + (n+1) H(+)(in) = a plastoquinol + NAD(+) + n H(+)(out). The enzyme catalyses a plastoquinone + NADPH + (n+1) H(+)(in) = a plastoquinol + NADP(+) + n H(+)(out). The polypeptide is NAD(P)H-quinone oxidoreductase chain 4, chloroplastic (Ceratophyllum demersum (Rigid hornwort)).